Reading from the N-terminus, the 267-residue chain is 2-oxo-hept-4-ene-1,7-dioate hydratase (267 aa).

Positions 106, 108, and 139 each coordinate Mg(2+).

The protein belongs to the hydratase/decarboxylase family. As to quaternary structure, homodecamer. Mg(2+) serves as cofactor.

The enzyme catalyses (4Z)-2-oxohept-4-enedioate + H2O = (4S)-4-hydroxy-2-oxoheptanedioate. Its pathway is aromatic compound metabolism; 4-hydroxyphenylacetate degradation; pyruvate and succinate semialdehyde from 4-hydroxyphenylacetate: step 6/7. Its function is as follows. Transforms 2-oxo-hept-4-ene-1,7-dioate (OHED) into 4-hydroxy-2-oxoheptanedioate, a step in the 4-hydroxyphenylacetic acid (4-HPA) degradation pathway. The chain is 2-oxo-hept-4-ene-1,7-dioate hydratase from Escherichia coli.